The sequence spans 419 residues: UDP-N-acetylglucosamine 1-carboxyvinyltransferase 2 (419 aa).

22–23 (KN) serves as a coordination point for phosphoenolpyruvate. Residue R92 participates in UDP-N-acetyl-alpha-D-glucosamine binding. C116 functions as the Proton donor in the catalytic mechanism. C116 is modified (2-(S-cysteinyl)pyruvic acid O-phosphothioketal). UDP-N-acetyl-alpha-D-glucosamine contacts are provided by residues 121–125 (RPIDL), D306, and V328.

It belongs to the EPSP synthase family. MurA subfamily.

Its subcellular location is the cytoplasm. The enzyme catalyses phosphoenolpyruvate + UDP-N-acetyl-alpha-D-glucosamine = UDP-N-acetyl-3-O-(1-carboxyvinyl)-alpha-D-glucosamine + phosphate. Its pathway is cell wall biogenesis; peptidoglycan biosynthesis. In terms of biological role, cell wall formation. Adds enolpyruvyl to UDP-N-acetylglucosamine. In Carboxydothermus hydrogenoformans (strain ATCC BAA-161 / DSM 6008 / Z-2901), this protein is UDP-N-acetylglucosamine 1-carboxyvinyltransferase 2.